A 59-amino-acid polypeptide reads, in one-letter code: Photosystem II reaction center protein K (59 aa).

The propeptide occupies 1–22; sequence MLNIFSLICLSSALHSSSFFFA. The helical transmembrane segment at 38 to 58 threads the bilayer; that stretch reads MPVIPVLFFLLALVWQAAVSF.

It belongs to the PsbK family. In terms of assembly, PSII is composed of 1 copy each of membrane proteins PsbA, PsbB, PsbC, PsbD, PsbE, PsbF, PsbH, PsbI, PsbJ, PsbK, PsbL, PsbM, PsbT, PsbX, PsbY, PsbZ, Psb30/Ycf12, at least 3 peripheral proteins of the oxygen-evolving complex and a large number of cofactors. It forms dimeric complexes.

The protein localises to the plastid. It is found in the chloroplast thylakoid membrane. One of the components of the core complex of photosystem II (PSII). PSII is a light-driven water:plastoquinone oxidoreductase that uses light energy to abstract electrons from H(2)O, generating O(2) and a proton gradient subsequently used for ATP formation. It consists of a core antenna complex that captures photons, and an electron transfer chain that converts photonic excitation into a charge separation. The protein is Photosystem II reaction center protein K of Piper cenocladum (Ant piper).